The primary structure comprises 183 residues: DELTA-miturgitoxin-Cp1b (183 aa).

A signal peptide spans 1-20 (MKFSLFFSVFFLAVLHACLS). Residues 21–47 (ESEIDLEDEEHFMSSDSFLSEIQDESR) constitute a propeptide that is removed on maturation. The Processing quadruplet motif signature appears at 44–47 (DESR). 8 disulfide bridges follow: cysteine 51–cysteine 66, cysteine 58–cysteine 75, cysteine 65–cysteine 88, cysteine 77–cysteine 86, cysteine 115–cysteine 130, cysteine 122–cysteine 139, cysteine 129–cysteine 157, and cysteine 141–cysteine 155. Residues 164-177 (QAIEGALRIAKKLI) form a predicted alpha-helix region. Tryptophan 181 is modified (tryptophan amide).

Belongs to the neurotoxin 19 (CSTX) family. Double-CSTX subfamily. Cleavage of the propeptide depends on the processing quadruplet motif (XXXR, with at least one of X being E). Expressed by the venom gland.

The protein localises to the secreted. It localises to the target cell membrane. Spider venom toxin that exhibits cytolytic activity by forming an alpha-helix across the membrane. Lethal to insect larvae. Causes instant paralysis and death in the larvae of the flesh fly (S.carnaria) at doses of 20 ug/g, at doses of less than 10 ug/g causes reversible paralysis. Has cytolytic activity against insect Sf9 cells. Causes stable and irreversible depolarization of fly muscle fibers, leading to contracture at higher toxin concentrations. Destabilizes membranes. The chain is DELTA-miturgitoxin-Cp1b from Cheiracanthium punctorium (Yellow sac spider).